Here is a 519-residue protein sequence, read N- to C-terminus: NADH-quinone oxidoreductase subunit C/D (519 aa).

The tract at residues 1–138 (MSERIEIPAE…TNEEPVDTTQ (138 aa)) is NADH dehydrogenase I subunit C. The interval 159-519 (DEYIINIGPQ…VDYVVPDIDR (361 aa)) is NADH dehydrogenase I subunit D.

It in the N-terminal section; belongs to the complex I 30 kDa subunit family. The protein in the C-terminal section; belongs to the complex I 49 kDa subunit family. In terms of assembly, NDH-1 is composed of 13 different subunits. Subunits NuoB, CD, E, F, and G constitute the peripheral sector of the complex.

The protein localises to the cell inner membrane. It catalyses the reaction a quinone + NADH + 5 H(+)(in) = a quinol + NAD(+) + 4 H(+)(out). In terms of biological role, NDH-1 shuttles electrons from NADH, via FMN and iron-sulfur (Fe-S) centers, to quinones in the respiratory chain. The immediate electron acceptor for the enzyme in this species is believed to be a menaquinone. Couples the redox reaction to proton translocation (for every two electrons transferred, four hydrogen ions are translocated across the cytoplasmic membrane), and thus conserves the redox energy in a proton gradient. The protein is NADH-quinone oxidoreductase subunit C/D of Phocaeicola vulgatus (strain ATCC 8482 / DSM 1447 / JCM 5826 / CCUG 4940 / NBRC 14291 / NCTC 11154) (Bacteroides vulgatus).